Reading from the N-terminus, the 190-residue chain is Ribose 1,5-bisphosphate phosphokinase PhnN (190 aa).

ATP is bound at residue 11 to 18 (GPSGSGKD).

This sequence belongs to the ribose 1,5-bisphosphokinase family.

The catalysed reaction is alpha-D-ribose 1,5-bisphosphate + ATP = 5-phospho-alpha-D-ribose 1-diphosphate + ADP. Its pathway is metabolic intermediate biosynthesis; 5-phospho-alpha-D-ribose 1-diphosphate biosynthesis; 5-phospho-alpha-D-ribose 1-diphosphate from D-ribose 5-phosphate (route II): step 3/3. In terms of biological role, catalyzes the phosphorylation of ribose 1,5-bisphosphate to 5-phospho-D-ribosyl alpha-1-diphosphate (PRPP). This chain is Ribose 1,5-bisphosphate phosphokinase PhnN, found in Thiobacillus denitrificans (strain ATCC 25259 / T1).